A 274-amino-acid polypeptide reads, in one-letter code: Putative phosphoenolpyruvate synthase regulatory protein (274 aa).

ADP is bound at residue 154 to 161 (GVSRCGKT).

This sequence belongs to the pyruvate, phosphate/water dikinase regulatory protein family. PSRP subfamily.

It catalyses the reaction [pyruvate, water dikinase] + ADP = [pyruvate, water dikinase]-phosphate + AMP + H(+). The catalysed reaction is [pyruvate, water dikinase]-phosphate + phosphate + H(+) = [pyruvate, water dikinase] + diphosphate. In terms of biological role, bifunctional serine/threonine kinase and phosphorylase involved in the regulation of the phosphoenolpyruvate synthase (PEPS) by catalyzing its phosphorylation/dephosphorylation. This is Putative phosphoenolpyruvate synthase regulatory protein from Pseudomonas aeruginosa (strain LESB58).